The primary structure comprises 685 residues: Polyphosphate kinase (685 aa).

Position 45 (Asn45) interacts with ATP. The Mg(2+) site is built by Arg375 and Arg405. The active-site Phosphohistidine intermediate is the His435. ATP is bound by residues Tyr468, Arg564, and His592.

The protein belongs to the polyphosphate kinase 1 (PPK1) family. Requires Mg(2+) as cofactor. An intermediate of this reaction is the autophosphorylated ppk in which a phosphate is covalently linked to a histidine residue through a N-P bond.

It catalyses the reaction [phosphate](n) + ATP = [phosphate](n+1) + ADP. Its function is as follows. Catalyzes the reversible transfer of the terminal phosphate of ATP to form a long-chain polyphosphate (polyP). This chain is Polyphosphate kinase, found in Neisseria meningitidis serogroup B (strain ATCC BAA-335 / MC58).